The primary structure comprises 377 residues: Beta sliding clamp (377 aa).

This sequence belongs to the beta sliding clamp family. As to quaternary structure, forms a ring-shaped head-to-tail homodimer around DNA which binds and tethers DNA polymerases and other proteins to the DNA. The DNA replisome complex has a single clamp-loading complex (3 tau and 1 each of delta, delta', psi and chi subunits) which binds 3 Pol III cores (1 core on the leading strand and 2 on the lagging strand) each with a beta sliding clamp dimer. Additional proteins in the replisome are other copies of gamma, psi and chi, Ssb, DNA helicase and RNA primase.

Its subcellular location is the cytoplasm. Confers DNA tethering and processivity to DNA polymerases and other proteins. Acts as a clamp, forming a ring around DNA (a reaction catalyzed by the clamp-loading complex) which diffuses in an ATP-independent manner freely and bidirectionally along dsDNA. Initially characterized for its ability to contact the catalytic subunit of DNA polymerase III (Pol III), a complex, multichain enzyme responsible for most of the replicative synthesis in bacteria; Pol III exhibits 3'-5' exonuclease proofreading activity. The beta chain is required for initiation of replication as well as for processivity of DNA replication. This chain is Beta sliding clamp (dnaN), found in Staphylococcus aureus (strain COL).